Reading from the N-terminus, the 72-residue chain is MPMSLDSLAVGMVALLVDYYSKALRASLNSTGIDRRWGDQWPSTVELTGRGVIEWESPTFCICSSSRSTAIV.

This is Putative ORF1 protein (ORF1) from Leishmania RNA virus 1 - 1 (isolate Leishmania guyanensis) (LRV-1-1).